The following is a 264-amino-acid chain: Acyl-[acyl-carrier-protein]--UDP-N-acetylglucosamine O-acyltransferase (264 aa).

This sequence belongs to the transferase hexapeptide repeat family. LpxA subfamily. As to quaternary structure, homotrimer.

It is found in the cytoplasm. It catalyses the reaction a (3R)-hydroxyacyl-[ACP] + UDP-N-acetyl-alpha-D-glucosamine = a UDP-3-O-[(3R)-3-hydroxyacyl]-N-acetyl-alpha-D-glucosamine + holo-[ACP]. It functions in the pathway glycolipid biosynthesis; lipid IV(A) biosynthesis; lipid IV(A) from (3R)-3-hydroxytetradecanoyl-[acyl-carrier-protein] and UDP-N-acetyl-alpha-D-glucosamine: step 1/6. Its function is as follows. Involved in the biosynthesis of lipid A, a phosphorylated glycolipid that anchors the lipopolysaccharide to the outer membrane of the cell. The sequence is that of Acyl-[acyl-carrier-protein]--UDP-N-acetylglucosamine O-acyltransferase from Actinobacillus pleuropneumoniae serotype 7 (strain AP76).